We begin with the raw amino-acid sequence, 130 residues long: S-protein homolog 22 (130 aa).

An N-terminal signal peptide occupies residues methionine 1–glycine 21.

It belongs to the plant self-incompatibility (S1) protein family.

It is found in the secreted. The polypeptide is S-protein homolog 22 (Arabidopsis thaliana (Mouse-ear cress)).